A 763-amino-acid chain; its full sequence is 1,4-alpha-glucan branching enzyme GlgB (763 aa).

The active-site Nucleophile is D437. E488 acts as the Proton donor in catalysis.

The protein belongs to the glycosyl hydrolase 13 family. GlgB subfamily. In terms of assembly, monomer.

It carries out the reaction Transfers a segment of a (1-&gt;4)-alpha-D-glucan chain to a primary hydroxy group in a similar glucan chain.. The protein operates within glycan biosynthesis; glycogen biosynthesis. Its function is as follows. Catalyzes the formation of the alpha-1,6-glucosidic linkages in glycogen by scission of a 1,4-alpha-linked oligosaccharide from growing alpha-1,4-glucan chains and the subsequent attachment of the oligosaccharide to the alpha-1,6 position. This chain is 1,4-alpha-glucan branching enzyme GlgB, found in Synechococcus sp. (strain JA-2-3B'a(2-13)) (Cyanobacteria bacterium Yellowstone B-Prime).